The following is a 361-amino-acid chain: Single-stranded DNA-binding protein 2 (361 aa).

K6 is modified (N6-acetyllysine). Positions 18–50 (AREKLALYVYEYLLHVGAQKSAQTFLSEIRWEK) constitute a LisH domain. Disordered regions lie at residues 147 to 171 (GGVP…HPNM) and 194 to 361 (GAMR…TMSV). Residues 204–219 (GGPGMPGMNMGPGGGR) are compositionally biased toward gly residues. Positions 225–236 (TNANSIPYSSAS) are enriched in polar residues. Residues 246-256 (GGGPPGTPIMP) are compositionally biased toward pro residues. Positions 289–299 (GSDGPMGGLGG) are enriched in gly residues. Residues 317–332 (ISKNSPNNMSLSNQPG) show a composition bias toward polar residues. Position 321 is a phosphoserine (S321). T333 carries the phosphothreonine modification. Residues 346-361 (NPFQSESYSPSMTMSV) are compositionally biased toward polar residues.

In terms of tissue distribution, ubiquitous.

The protein resides in the nucleus. The sequence is that of Single-stranded DNA-binding protein 2 (SSBP2) from Homo sapiens (Human).